Consider the following 252-residue polypeptide: Hydroxyacylglutathione hydrolase (252 aa).

Zn(2+)-binding residues include H54, H56, D58, H59, H111, D128, and H166.

Belongs to the metallo-beta-lactamase superfamily. Glyoxalase II family. As to quaternary structure, monomer. It depends on Zn(2+) as a cofactor.

It carries out the reaction an S-(2-hydroxyacyl)glutathione + H2O = a 2-hydroxy carboxylate + glutathione + H(+). The protein operates within secondary metabolite metabolism; methylglyoxal degradation; (R)-lactate from methylglyoxal: step 2/2. In terms of biological role, thiolesterase that catalyzes the hydrolysis of S-D-lactoyl-glutathione to form glutathione and D-lactic acid. The sequence is that of Hydroxyacylglutathione hydrolase from Vibrio parahaemolyticus serotype O3:K6 (strain RIMD 2210633).